The primary structure comprises 614 residues: Protein NRT1/ PTR FAMILY 7.3 (614 aa).

The next 2 membrane-spanning stretches (helical) occupy residues 41–61 (WVAG…FFGV) and 87–107 (WTGT…SYWG). A Phosphothreonine modification is found at Thr111. The next 9 membrane-spanning stretches (helical) occupy residues 114 to 134 (IFQV…YMFL), 152 to 172 (MMEI…YGGY), 196 to 216 (IAFF…SNTI), 226 to 246 (WALG…LFLV), 355 to 375 (PIWL…SLFV), 390 to 410 (IPPA…IFLY), 435 to 455 (MGIG…VECY), 515 to 535 (LCMM…TMVV), and 559 to 579 (FYFL…ACAK). The disordered stretch occupies residues 592–614 (MQDMSDDDYDTESEEEREKDSKV). A compositionally biased stretch (acidic residues) spans 593-606 (QDMSDDDYDTESEE).

Belongs to the major facilitator superfamily. Proton-dependent oligopeptide transporter (POT/PTR) (TC 2.A.17) family. In terms of tissue distribution, high expression in roots. Barely detected in shoots. Expressed in root pericycle cells close to the xylem.

It is found in the cell membrane. Functionally, low-affinity proton-dependent bidirectional nitrate transporter. Involved in nitrate loading into xylem and not in nitrate uptake. Not involved in histidine or dipeptides transport. The chain is Protein NRT1/ PTR FAMILY 7.3 (NPF7.3) from Arabidopsis thaliana (Mouse-ear cress).